The following is a 173-amino-acid chain: Probable DNA-directed RNA polymerase subunit delta (173 aa).

The HTH HARE-type domain maps to 14–81; it reads LSMIELGVKI…GSGMWGLKRW (68 aa). A disordered region spans residues 86–173; sequence QAEEEITEEP…EDENDDDNTR (88 aa). Positions 109 to 173 are enriched in acidic residues; the sequence is IDDVDDDLDV…EDENDDDNTR (65 aa).

This sequence belongs to the RpoE family. RNAP is composed of a core of 2 alpha, a beta and a beta' subunits. The core is associated with a delta subunit and one of several sigma factors.

Functionally, participates in both the initiation and recycling phases of transcription. In the presence of the delta subunit, RNAP displays an increased specificity of transcription, a decreased affinity for nucleic acids, and an increased efficiency of RNA synthesis because of enhanced recycling. The protein is Probable DNA-directed RNA polymerase subunit delta of Oceanobacillus iheyensis (strain DSM 14371 / CIP 107618 / JCM 11309 / KCTC 3954 / HTE831).